Here is a 420-residue protein sequence, read N- to C-terminus: Threonine aspartase 1 (420 aa).

Positions 1–25 (MIMEKGMNSGEGLPSRSSQASAAKV) are disordered. The active-site Nucleophile is the threonine 234.

It belongs to the Ntn-hydrolase family. In terms of assembly, intramolecular proteolysis generates 2 subunits, alpha and beta, which reassemble through a non-covalent association to form the fully active enzyme.

Protease responsible for KMT2A/MLL1 and KMT2D/MLL2 processing and activation. Through substrate activation, it controls the expression of HOXA genes, and the expression of key cell cycle regulators including CCNA1, CCNB1, CCNE1 and CDKN2A. This is Threonine aspartase 1 (Tasp1) from Mus musculus (Mouse).